Reading from the N-terminus, the 458-residue chain is NADH-quinone oxidoreductase subunit N (458 aa).

Helical transmembrane passes span 4-24 (LLPE…AVII), 30-50 (IISN…FKYS), 62-82 (GINI…SMII), 94-114 (LKFE…VAIS), 118-138 (FLLL…LAGF), 153-173 (FILG…IYGF), 194-214 (LGLI…LSSV), 235-255 (FTAA…KLII), 261-281 (INYN…AFGA), 290-310 (LMAY…LLHN), 318-338 (LLYI…LIML), 361-381 (IAAI…LTGF), 397-417 (FILA…YLKV), and 438-458 (LLLI…IISF).

It belongs to the complex I subunit 2 family. As to quaternary structure, NDH-1 is composed of 14 different subunits. Subunits NuoA, H, J, K, L, M, N constitute the membrane sector of the complex.

Its subcellular location is the cell inner membrane. The catalysed reaction is a quinone + NADH + 5 H(+)(in) = a quinol + NAD(+) + 4 H(+)(out). NDH-1 shuttles electrons from NADH, via FMN and iron-sulfur (Fe-S) centers, to quinones in the respiratory chain. The immediate electron acceptor for the enzyme in this species is believed to be ubiquinone. Couples the redox reaction to proton translocation (for every two electrons transferred, four hydrogen ions are translocated across the cytoplasmic membrane), and thus conserves the redox energy in a proton gradient. In Rickettsia felis (strain ATCC VR-1525 / URRWXCal2) (Rickettsia azadi), this protein is NADH-quinone oxidoreductase subunit N.